A 68-amino-acid polypeptide reads, in one-letter code: Large ribosomal subunit protein bL31 (68 aa).

Residues Cys-16, Cys-18, Cys-37, and Cys-40 each coordinate Zn(2+).

Belongs to the bacterial ribosomal protein bL31 family. Type A subfamily. In terms of assembly, part of the 50S ribosomal subunit. The cofactor is Zn(2+).

Binds the 23S rRNA. This is Large ribosomal subunit protein bL31 from Nitrosococcus oceani (strain ATCC 19707 / BCRC 17464 / JCM 30415 / NCIMB 11848 / C-107).